A 120-amino-acid chain; its full sequence is DNA-binding protein HQ_1105A (120 aa).

Residues 1 to 55 (MSETPDDLDELRQQRMEELRDQADGQQSQTSDNTAAAQEAAREKAEAQQEALLKQ) are disordered. Residues 10–23 (ELRQQRMEELRDQA) are compositionally biased toward basic and acidic residues. Over residues 24 to 34 (DGQQSQTSDNT) the composition is skewed to polar residues.

This sequence belongs to the PDCD5 family.

The chain is DNA-binding protein HQ_1105A from Haloquadratum walsbyi (strain DSM 16790 / HBSQ001).